The primary structure comprises 238 residues: Thrombin-like enzyme halystase (238 aa).

A Peptidase S1 domain is found at 1–229; the sequence is IIGGDECNIN…HLDWIKSIIA (229 aa). Cystine bridges form between cysteine 7–cysteine 141, cysteine 28–cysteine 44, cysteine 76–cysteine 236, cysteine 120–cysteine 190, cysteine 152–cysteine 169, and cysteine 180–cysteine 205. The active-site Charge relay system is histidine 43. Residue asparagine 81 is glycosylated (N-linked (GlcNAc...) asparagine). Catalysis depends on aspartate 88, which acts as the Charge relay system. The N-linked (GlcNAc...) asparagine glycan is linked to asparagine 100. Serine 184 functions as the Charge relay system in the catalytic mechanism.

It belongs to the peptidase S1 family. Snake venom subfamily. In terms of assembly, monomer. In terms of tissue distribution, expressed by the venom gland.

It localises to the secreted. With respect to regulation, inhibited by diisopropylfluorophosphate (DFP), PMSF and leupeptin. Its function is as follows. Thrombin-like snake venom serine protease. Cleaves fibrinogen (beta chain of fibrinogen (FGB) and more slowly alpha chain (FGA)) without inducing fibrin clotting and cleaves kininogen to produce bradykinin (KNG), resulting in the reduction of blood pressure. The chain is Thrombin-like enzyme halystase from Gloydius blomhoffii (Mamushi).